The primary structure comprises 118 residues: MPRVKRGVTARARHKKVLALAKGFRGRRKNVYRIAKQAVMKAGQYAYRDRRAKKRVFRRLWIARINAASRSLGLTYSKFIAGLKKAQIDIDRKVLSDMAIHDPAAFGSIVDKVKAQLA.

The protein belongs to the bacterial ribosomal protein bL20 family.

Its function is as follows. Binds directly to 23S ribosomal RNA and is necessary for the in vitro assembly process of the 50S ribosomal subunit. It is not involved in the protein synthesizing functions of that subunit. This chain is Large ribosomal subunit protein bL20, found in Leptothrix cholodnii (strain ATCC 51168 / LMG 8142 / SP-6) (Leptothrix discophora (strain SP-6)).